The chain runs to 733 residues: 2'-5'-oligoadenylate synthase 2 (733 aa).

The N-myristoyl glycine moiety is linked to residue G2. OAS domain stretches follow at residues 47-365 (VPSQ…CWDV) and 373-713 (TPSH…WKVP). K408 carries the N6-acetyllysine modification. S427 lines the ATP pocket. Residues D439, D441, and D510 each coordinate Mg(2+). Residues R574 and K577 each contribute to the ATP site.

The protein belongs to the 2-5A synthase family. As to quaternary structure, homodimer. It depends on Mg(2+) as a cofactor. Myristoylation is not essential for its activity. Post-translationally, glycosylated. Glycosylation is essential for its activity.

It is found in the cytoplasm. Its subcellular location is the perinuclear region. It carries out the reaction 3 ATP = 5'-triphosphoadenylyl-(2'-&gt;5')-adenylyl-(2'-&gt;5')-adenosine + 2 diphosphate. Produced as a latent enzyme which is activated by double stranded RNA (dsRNA) generated during the course of viral infection. The dsRNA activator must be at least 15 nucleotides long, and no modification of the 2'-hydroxyl group is tolerated. ssRNA or dsDNA do not act as activators. Strongly inhibited by copper, iron and zinc ions. Partially inhibited by cobalt and nickel ions. Its function is as follows. Interferon-induced, dsRNA-activated antiviral enzyme which plays a critical role in cellular innate antiviral response. Activated by detection of double stranded RNA (dsRNA): polymerizes higher oligomers of 2'-5'-oligoadenylates (2-5A) from ATP which then bind to the inactive monomeric form of ribonuclease L (RNASEL) leading to its dimerization and subsequent activation. Activation of RNASEL leads to degradation of cellular as well as viral RNA, resulting in the inhibition of protein synthesis, thus terminating viral replication. Can mediate the antiviral effect via the classical RNASEL-dependent pathway or an alternative antiviral pathway independent of RNASEL. In addition, it may also play a role in other cellular processes such as apoptosis, cell growth, differentiation and gene regulation. May act as a negative regulator of lactation, stopping lactation in virally infected mammary gland lobules, thereby preventing transmission of viruses to neonates. Non-infected lobules would not be affected, allowing efficient pup feeding during infection. This chain is 2'-5'-oligoadenylate synthase 2 (Oas2), found in Rattus norvegicus (Rat).